We begin with the raw amino-acid sequence, 95 residues long: Aspartyl/glutamyl-tRNA(Asn/Gln) amidotransferase subunit C (95 aa).

Belongs to the GatC family. In terms of assembly, heterotrimer of A, B and C subunits.

It carries out the reaction L-glutamyl-tRNA(Gln) + L-glutamine + ATP + H2O = L-glutaminyl-tRNA(Gln) + L-glutamate + ADP + phosphate + H(+). The catalysed reaction is L-aspartyl-tRNA(Asn) + L-glutamine + ATP + H2O = L-asparaginyl-tRNA(Asn) + L-glutamate + ADP + phosphate + 2 H(+). Its function is as follows. Allows the formation of correctly charged Asn-tRNA(Asn) or Gln-tRNA(Gln) through the transamidation of misacylated Asp-tRNA(Asn) or Glu-tRNA(Gln) in organisms which lack either or both of asparaginyl-tRNA or glutaminyl-tRNA synthetases. The reaction takes place in the presence of glutamine and ATP through an activated phospho-Asp-tRNA(Asn) or phospho-Glu-tRNA(Gln). The polypeptide is Aspartyl/glutamyl-tRNA(Asn/Gln) amidotransferase subunit C (Pelagibacter ubique (strain HTCC1062)).